The chain runs to 473 residues: MSEGTLYDKVWEEHTVSELPTGQTQLFCGLHLIHEVTSPQAFGMLQERDLEVAYPNRTHATVDHIVPTSDQSRPFRDDAAEEMMAELEQNVREAGINFSDPTSGEQGIVHVIGPEKGLTQPGMTIVCGDSHTSTHGAFGALAFGIGTSQIRDVLATQTVAMEKKKVRKIEVTGELGPGVEAKDVILEIIRRLGTEGGVGYVYEYAGEAIEDLDMEGRMSICNMSIEGGARAGYVNPDETTYEWLKETEYFQENPERFDELKPYWESIRSDEDAEYDDVVTIDGSELEPVVTWGTTPGQGVGITQPIPAPEDLPEEKQETARMAQEHMGVTPGETMEGYEIDVAFLGSCTNARLPDLRRAAGVVKGRQVADSVRAMVVPGSQRVKAAAEAEGLDEVFKEAGFEWREAGCSMCLGMNEDQLEGDEASASSSNRNFIGRQGSKDGRTVLMNPRMVAAAAVTGEVTDVRELKEVTTV.

3 residues coordinate [4Fe-4S] cluster: C348, C408, and C411. Positions 421 to 440 (GDEASASSSNRNFIGRQGSK) are disordered.

It belongs to the aconitase/IPM isomerase family. LeuC type 1 subfamily. In terms of assembly, heterodimer of LeuC and LeuD. It depends on [4Fe-4S] cluster as a cofactor.

It catalyses the reaction (2R,3S)-3-isopropylmalate = (2S)-2-isopropylmalate. Its pathway is amino-acid biosynthesis; L-leucine biosynthesis; L-leucine from 3-methyl-2-oxobutanoate: step 2/4. Its function is as follows. Catalyzes the isomerization between 2-isopropylmalate and 3-isopropylmalate, via the formation of 2-isopropylmaleate. The chain is 3-isopropylmalate dehydratase large subunit from Haloferax volcanii (strain ATCC 29605 / DSM 3757 / JCM 8879 / NBRC 14742 / NCIMB 2012 / VKM B-1768 / DS2) (Halobacterium volcanii).